A 193-amino-acid chain; its full sequence is Orotate phosphoribosyltransferase (193 aa).

5-phospho-alpha-D-ribose 1-diphosphate-binding positions include Arg85, Lys89, and 111 to 119 (DDVLTTGKS). Orotate is bound by residues Thr115 and Arg143.

This sequence belongs to the purine/pyrimidine phosphoribosyltransferase family. PyrE subfamily. As to quaternary structure, homodimer. Mg(2+) is required as a cofactor.

It catalyses the reaction orotidine 5'-phosphate + diphosphate = orotate + 5-phospho-alpha-D-ribose 1-diphosphate. It functions in the pathway pyrimidine metabolism; UMP biosynthesis via de novo pathway; UMP from orotate: step 1/2. Its function is as follows. Catalyzes the transfer of a ribosyl phosphate group from 5-phosphoribose 1-diphosphate to orotate, leading to the formation of orotidine monophosphate (OMP). The protein is Orotate phosphoribosyltransferase of Pyrobaculum aerophilum (strain ATCC 51768 / DSM 7523 / JCM 9630 / CIP 104966 / NBRC 100827 / IM2).